The following is a 438-amino-acid chain: ATP-dependent protease ATPase subunit HslU (438 aa).

ATP is bound by residues V18, G60–E65, D252, E317, and R389.

The protein belongs to the ClpX chaperone family. HslU subfamily. A double ring-shaped homohexamer of HslV is capped on each side by a ring-shaped HslU homohexamer. The assembly of the HslU/HslV complex is dependent on binding of ATP.

It localises to the cytoplasm. Its function is as follows. ATPase subunit of a proteasome-like degradation complex; this subunit has chaperone activity. The binding of ATP and its subsequent hydrolysis by HslU are essential for unfolding of protein substrates subsequently hydrolyzed by HslV. HslU recognizes the N-terminal part of its protein substrates and unfolds these before they are guided to HslV for hydrolysis. The chain is ATP-dependent protease ATPase subunit HslU from Saccharophagus degradans (strain 2-40 / ATCC 43961 / DSM 17024).